The sequence spans 351 residues: Transmembrane protein DDB_G0272716 (351 aa).

Residues Asn-4 and Asn-59 are each glycosylated (N-linked (GlcNAc...) asparagine). The next 2 helical transmembrane spans lie at 175–195 (FSSLFGVISGFLGIGSVTAIG) and 215–235 (VVAPICAPVLLTFGCLVGAFI). N-linked (GlcNAc...) asparagine glycosylation occurs at Asn-345.

The protein resides in the membrane. The chain is Transmembrane protein DDB_G0272716 from Dictyostelium discoideum (Social amoeba).